The primary structure comprises 243 residues: UPF0246 protein M6_Spy1787 (243 aa).

The protein belongs to the UPF0246 family.

This is UPF0246 protein M6_Spy1787 from Streptococcus pyogenes serotype M6 (strain ATCC BAA-946 / MGAS10394).